Consider the following 346-residue polypeptide: MASLGGDNSQAEGAEVRHVPVLIAEVIDALKPAPGAVIVDGTFGAGGYTRRILETGADVIAIDRDPTAIEAGRAMEKEFPGRLNLVESRFSALDEAVARMSGAGKKVDGVVLDIGVSSMQIDEAERGFSFQKDGPLDMRMSSGGPSAADAVNRLKTGDLARIFNFLGEERHAGRIARMIEKRRAAKPFTRTLDLANAIETLVGRNPKDRIHPATRVFQALRVYVNDELGELARALLAAERILKPGGRLVVVTFHSLEDRMVKRFFADRAGGSAGSRHMPETHMRLPSFTPAVKGAVGPTPEEEERNPRARSAKLRAGIRTENPPLEDDLSLFGLPKLPETNELARS.

S-adenosyl-L-methionine is bound by residues 46–48 (GGY), aspartate 63, phenylalanine 90, aspartate 113, and glutamine 120. A disordered region spans residues 270 to 346 (GGSAGSRHMP…LPETNELARS (77 aa)).

Belongs to the methyltransferase superfamily. RsmH family.

It localises to the cytoplasm. The catalysed reaction is cytidine(1402) in 16S rRNA + S-adenosyl-L-methionine = N(4)-methylcytidine(1402) in 16S rRNA + S-adenosyl-L-homocysteine + H(+). Specifically methylates the N4 position of cytidine in position 1402 (C1402) of 16S rRNA. The protein is Ribosomal RNA small subunit methyltransferase H of Brucella suis (strain ATCC 23445 / NCTC 10510).